The chain runs to 378 residues: Lipid-A-disaccharide synthase (378 aa).

It belongs to the LpxB family.

The enzyme catalyses a lipid X + a UDP-2-N,3-O-bis[(3R)-3-hydroxyacyl]-alpha-D-glucosamine = a lipid A disaccharide + UDP + H(+). It functions in the pathway bacterial outer membrane biogenesis; LPS lipid A biosynthesis. Functionally, condensation of UDP-2,3-diacylglucosamine and 2,3-diacylglucosamine-1-phosphate to form lipid A disaccharide, a precursor of lipid A, a phosphorylated glycolipid that anchors the lipopolysaccharide to the outer membrane of the cell. This Pseudomonas aeruginosa (strain UCBPP-PA14) protein is Lipid-A-disaccharide synthase.